The sequence spans 105 residues: Vacuolar ATPase assembly integral membrane protein VMA21 homolog (105 aa).

A disordered region spans residues 1 to 26 (MSTKNKKAAGGNGGAPKQTRQQSHDS). Topologically, residues 1–36 (MSTKNKKAAGGNGGAPKQTRQQSHDSQDYSSFKTVL) are cytoplasmic. The helical transmembrane segment at 37 to 57 (FYCMLIVFLPVLTFFVLKGFV) threads the bilayer. Topologically, residues 58-68 (LDQFLNISEVK) are lumenal. The helical transmembrane segment at 69 to 89 (VNIASAVGAVVALHIALGLYI) threads the bilayer. The Cytoplasmic segment spans residues 90–105 (YRAYFGAPGSKGSKTD).

The protein belongs to the VMA21 family.

Its subcellular location is the endoplasmic reticulum membrane. The protein resides in the endoplasmic reticulum-Golgi intermediate compartment membrane. It localises to the cytoplasmic vesicle. It is found in the COPII-coated vesicle membrane. Required for the assembly of the V0 complex of the vacuolar ATPase (V-ATPase) in the endoplasmic reticulum. The sequence is that of Vacuolar ATPase assembly integral membrane protein VMA21 homolog from Drosophila sechellia (Fruit fly).